A 297-amino-acid polypeptide reads, in one-letter code: Putative S-adenosyl-L-methionine-dependent methyltransferase MSMEG_0614/MSMEI_0598 (297 aa).

S-adenosyl-L-methionine contacts are provided by residues Asp-125 and 154-155; that span reads DL.

It belongs to the UPF0677 family.

Its function is as follows. Exhibits S-adenosyl-L-methionine-dependent methyltransferase activity. The polypeptide is Putative S-adenosyl-L-methionine-dependent methyltransferase MSMEG_0614/MSMEI_0598 (Mycolicibacterium smegmatis (strain ATCC 700084 / mc(2)155) (Mycobacterium smegmatis)).